Here is a 194-residue protein sequence, read N- to C-terminus: Imidazoleglycerol-phosphate dehydratase (194 aa).

Belongs to the imidazoleglycerol-phosphate dehydratase family.

It is found in the cytoplasm. The enzyme catalyses D-erythro-1-(imidazol-4-yl)glycerol 3-phosphate = 3-(imidazol-4-yl)-2-oxopropyl phosphate + H2O. The protein operates within amino-acid biosynthesis; L-histidine biosynthesis; L-histidine from 5-phospho-alpha-D-ribose 1-diphosphate: step 6/9. The polypeptide is Imidazoleglycerol-phosphate dehydratase (Bacillus licheniformis (strain ATCC 14580 / DSM 13 / JCM 2505 / CCUG 7422 / NBRC 12200 / NCIMB 9375 / NCTC 10341 / NRRL NRS-1264 / Gibson 46)).